The primary structure comprises 270 residues: 3-methyl-2-oxobutanoate hydroxymethyltransferase (270 aa).

Asp48 and Asp87 together coordinate Mg(2+). 3-methyl-2-oxobutanoate is bound by residues 48–49, Asp87, and Lys117; that span reads DS. Glu119 provides a ligand contact to Mg(2+). Glu186 functions as the Proton acceptor in the catalytic mechanism.

This sequence belongs to the PanB family. In terms of assembly, homodecamer; pentamer of dimers. The cofactor is Mg(2+).

The protein localises to the cytoplasm. The catalysed reaction is 3-methyl-2-oxobutanoate + (6R)-5,10-methylene-5,6,7,8-tetrahydrofolate + H2O = 2-dehydropantoate + (6S)-5,6,7,8-tetrahydrofolate. Its pathway is cofactor biosynthesis; (R)-pantothenate biosynthesis; (R)-pantoate from 3-methyl-2-oxobutanoate: step 1/2. Functionally, catalyzes the reversible reaction in which hydroxymethyl group from 5,10-methylenetetrahydrofolate is transferred onto alpha-ketoisovalerate to form ketopantoate. In Synechococcus sp. (strain RCC307), this protein is 3-methyl-2-oxobutanoate hydroxymethyltransferase.